Here is a 432-residue protein sequence, read N- to C-terminus: CBL-interacting serine/threonine-protein kinase 17 (432 aa).

One can recognise a Protein kinase domain in the interval 11–266 (YELGRTLGEG…IAGIKAHDWF (256 aa)). ATP-binding positions include 17-25 (LGEGNSAKV) and lysine 40. Aspartate 134 serves as the catalytic Proton acceptor. Residues 152-181 (DFGLSALSQHYREDGLLHTTCGSPNYVAPE) form an activation loop region. Phosphoserine is present on serine 156. Residue threonine 170 is modified to Phosphothreonine. The NAF domain maps to 301–325 (DSPTIINAFQLIGMSSFLDLSGFFE). Positions 331-360 (ERQIRFTSNSLAKDLLENIETIFTEMGFCL) are PPI.

It belongs to the protein kinase superfamily. CAMK Ser/Thr protein kinase family. SNF1 subfamily. As to quaternary structure, interacts with CBL1. The cofactor is Mn(2+).

The catalysed reaction is L-seryl-[protein] + ATP = O-phospho-L-seryl-[protein] + ADP + H(+). The enzyme catalyses L-threonyl-[protein] + ATP = O-phospho-L-threonyl-[protein] + ADP + H(+). Functionally, CIPK serine-threonine protein kinases interact with CBL proteins. Binding of a CBL protein to the regulatory NAF domain of CIPK protein lead to the activation of the kinase in a calcium-dependent manner. This chain is CBL-interacting serine/threonine-protein kinase 17 (CIPK17), found in Arabidopsis thaliana (Mouse-ear cress).